Consider the following 535-residue polypeptide: MMGAVQLPVETEACLHDDAASRPISDSNTVRVAVLRQHQYHSSVTYHRLDDNRLIPGVVGYSYLRDIADEGKKQSPSKQHARVIQAYSKIHSLLSPPREPGPIDSETKTREKKSSPVIVHDKRCAFIERLEPPPNSKADIVNTVFAQVNLRTPVGPPLDQFVNCRSSNIKINDLKDSANGLCRPITISTGICLFSSRLLGFIPTNGLSTTDGATETVIPPLPYSADATFYELETCARMAMTIAGLAVTAGTGGTAGSRPIVVRLDVPCLQYYCYPLELLQAGLVSWKYVQEWFRLVDRRHRQVAGLLKDTITHEVLRRGGDIQVEVTAGTIAATQLLRLSVFDRMELPSVDDILFVLKWVGPYQAAWREFLDILDDCQRPKDLRSVALMAYVFEVMYPALHQIATKSLHGNGEKSGRPLLIQVDDIAEWRIFDHAEKLLKRFKERQHGFYPLLVGVFPSPRIFTSEDQGRSTLFLHDPGLKILQTRSPSSNSEEGSCVVRPLDIIGQIYGREVQDTLGQLTRKHGLSAADGPESD.

A disordered region spans residues 93-114; the sequence is LLSPPREPGPIDSETKTREKKS. Basic and acidic residues predominate over residues 105–114; that stretch reads SETKTREKKS. Residues 424–428 carry the Conserved DDXXE motif motif; the sequence is DDIAE.

It belongs to the arginine-containing cyclodipeptide synthase family.

The enzyme catalyses L-tryptophyl-tRNA(Trp) + L-arginyl-tRNA(Arg) = cyclo(L-arginyl-L-tryptophyl) + tRNA(Trp) + tRNA(Arg) + H(+). Its pathway is secondary metabolite biosynthesis. Functionally, arginine-containing cyclodipeptide synthase; part of the cluster that mediates the biosynthesis of a highly modified cyclo-arginine-tryptophan dipeptide (cRW). Within the pathway, AnoA acts as the scaffold-generating enzyme and is responsible for formation of the cyclo-Arg-Trp diketopiperazine (cRW) from L-arginyl-tRNA(Arg) + L-tryptophanyl-tRNA(Trp). Additional enzymes from the cluster then further modify the cyclo-Arg-Asp diketopiperazine (cRW) scaffold. The chain is Arginine-containing cyclodipeptide synthase anoA from Aspergillus nomiae (Aspergillus nomius).